Consider the following 170-residue polypeptide: Ureidoglycolate lyase (170 aa).

The protein belongs to the ureidoglycolate lyase family. Homodimer. Ni(2+) is required as a cofactor.

The enzyme catalyses (S)-ureidoglycolate = urea + glyoxylate. It functions in the pathway nitrogen metabolism; (S)-allantoin degradation. In terms of biological role, catalyzes the catabolism of the allantoin degradation intermediate (S)-ureidoglycolate, generating urea and glyoxylate. Involved in the utilization of allantoin as nitrogen source. In Burkholderia mallei (strain NCTC 10247), this protein is Ureidoglycolate lyase.